A 462-amino-acid polypeptide reads, in one-letter code: Polygalacturonase (462 aa).

Positions 1–22 (MALTRLLLPISILWFCFYSSHT) are cleaved as a signal peptide. N-linked (GlcNAc...) asparagine glycosylation is present at asparagine 173. The Proton donor role is filled by aspartate 278. Cysteines 280 and 297 form a disulfide. The N-linked (GlcNAc...) asparagine glycan is linked to asparagine 294. Histidine 301 is an active-site residue. N-linked (GlcNAc...) asparagine glycosylation occurs at asparagine 358. 2 disulfides stabilise this stretch: cysteine 407–cysteine 413 and cysteine 435–cysteine 460.

The protein belongs to the glycosyl hydrolase 28 family.

It is found in the secreted. The protein resides in the cell wall. The catalysed reaction is (1,4-alpha-D-galacturonosyl)n+m + H2O = (1,4-alpha-D-galacturonosyl)n + (1,4-alpha-D-galacturonosyl)m.. Acts in concert with the pectinesterase, in the ripening process. Is involved in cell wall metabolism, specifically in polyuronide degradation. The protein is Polygalacturonase of Persea americana (Avocado).